The primary structure comprises 248 residues: Aspartate/glutamate leucyltransferase (248 aa).

The protein belongs to the R-transferase family. Bpt subfamily.

The protein localises to the cytoplasm. It catalyses the reaction N-terminal L-glutamyl-[protein] + L-leucyl-tRNA(Leu) = N-terminal L-leucyl-L-glutamyl-[protein] + tRNA(Leu) + H(+). It carries out the reaction N-terminal L-aspartyl-[protein] + L-leucyl-tRNA(Leu) = N-terminal L-leucyl-L-aspartyl-[protein] + tRNA(Leu) + H(+). Functionally, functions in the N-end rule pathway of protein degradation where it conjugates Leu from its aminoacyl-tRNA to the N-termini of proteins containing an N-terminal aspartate or glutamate. This is Aspartate/glutamate leucyltransferase from Methylorubrum populi (strain ATCC BAA-705 / NCIMB 13946 / BJ001) (Methylobacterium populi).